The following is a 165-amino-acid chain: Protein-export protein SecB (165 aa).

Belongs to the SecB family. As to quaternary structure, homotetramer, a dimer of dimers. One homotetramer interacts with 1 SecA dimer.

The protein localises to the cytoplasm. In terms of biological role, one of the proteins required for the normal export of preproteins out of the cell cytoplasm. It is a molecular chaperone that binds to a subset of precursor proteins, maintaining them in a translocation-competent state. It also specifically binds to its receptor SecA. This Ruegeria pomeroyi (strain ATCC 700808 / DSM 15171 / DSS-3) (Silicibacter pomeroyi) protein is Protein-export protein SecB.